A 101-amino-acid chain; its full sequence is MAKLSLIERENKRAKTVEKYTAKRAELKAIIADQSRSDEERYEARLKLQALPRNASPIRQRNRCSLTGRPRGTFRKFGLARSKIREIAFRGEIPGLTKASW.

The protein belongs to the universal ribosomal protein uS14 family. As to quaternary structure, part of the 30S ribosomal subunit. Contacts proteins S3 and S10.

Its function is as follows. Binds 16S rRNA, required for the assembly of 30S particles and may also be responsible for determining the conformation of the 16S rRNA at the A site. The sequence is that of Small ribosomal subunit protein uS14 from Polynucleobacter necessarius subsp. necessarius (strain STIR1).